We begin with the raw amino-acid sequence, 89 residues long: Small ribosomal subunit protein uS15 (89 aa).

It belongs to the universal ribosomal protein uS15 family. As to quaternary structure, part of the 30S ribosomal subunit. Forms a bridge to the 50S subunit in the 70S ribosome, contacting the 23S rRNA.

One of the primary rRNA binding proteins, it binds directly to 16S rRNA where it helps nucleate assembly of the platform of the 30S subunit by binding and bridging several RNA helices of the 16S rRNA. Functionally, forms an intersubunit bridge (bridge B4) with the 23S rRNA of the 50S subunit in the ribosome. The sequence is that of Small ribosomal subunit protein uS15 from Ruegeria sp. (strain TM1040) (Silicibacter sp.).